We begin with the raw amino-acid sequence, 686 residues long: Thymidine kinase (686 aa).

The span at 1 to 14 (MASNSHNNYNTPRR) shows a compositional bias: polar residues. 2 disordered regions span residues 1–21 (MASN…DVPK) and 64–85 (NPGL…PSSD). 243–250 (GCMAAGKT) is an ATP binding site. The active-site Proton acceptor is glutamate 270. Glutamine 308 provides a ligand contact to substrate. Arginine 398 contacts ATP. Substrate is bound at residue arginine 404.

The protein belongs to the herpesviridae thymidine kinase family. Homodimer.

It carries out the reaction thymidine + ATP = dTMP + ADP + H(+). In terms of biological role, catalyzes the transfer of the gamma-phospho group of ATP to thymidine to generate dTMP in the salvage pathway of pyrimidine synthesis. The dTMP serves as a substrate for DNA polymerase during viral DNA replication. Allows the virus to be reactivated and to grow in non-proliferative cells lacking a high concentration of phosphorylated nucleic acid precursors. The sequence is that of Thymidine kinase from Alcelaphine herpesvirus 1 (strain WC11) (AlHV-1).